We begin with the raw amino-acid sequence, 197 residues long: MKVGVLALQGGVVEHIYMIREAAKRLGKEVEVVEVRKPEHLNSLRAIVLPGGESTAMYKLGKRTGLDKRLKEALLEGLPALGTCAGAALLAREIEDKQSGKRYEPLLGVADFKVVRNFFGRQRESFEANLNIKGIGTFRGVFIRAPVMVPLSPAVEVLGEFKGNAVMVKQGNIIATSFHPELTSDTRIHEMLLSEAS.

52-54 (GES) is an L-glutamine binding site. Catalysis depends on cysteine 84, which acts as the Nucleophile. L-glutamine is bound by residues arginine 116 and 143–144 (IR). Catalysis depends on charge relay system residues histidine 179 and glutamate 181.

Belongs to the glutaminase PdxT/SNO family. In terms of assembly, in the presence of PdxS, forms a dodecamer of heterodimers. Only shows activity in the heterodimer.

It catalyses the reaction aldehydo-D-ribose 5-phosphate + D-glyceraldehyde 3-phosphate + L-glutamine = pyridoxal 5'-phosphate + L-glutamate + phosphate + 3 H2O + H(+). The enzyme catalyses L-glutamine + H2O = L-glutamate + NH4(+). It participates in cofactor biosynthesis; pyridoxal 5'-phosphate biosynthesis. In terms of biological role, catalyzes the hydrolysis of glutamine to glutamate and ammonia as part of the biosynthesis of pyridoxal 5'-phosphate. The resulting ammonia molecule is channeled to the active site of PdxS. This Ignicoccus hospitalis (strain KIN4/I / DSM 18386 / JCM 14125) protein is Pyridoxal 5'-phosphate synthase subunit PdxT.